Here is a 1185-residue protein sequence, read N- to C-terminus: Syntaxin-binding protein 5-like (1185 aa).

Met-1 carries the post-translational modification N-acetylmethionine. The interval 15-44 is disordered; sequence ASSPGSGSSSGSNSGGAGSGSVHPGGTAGL. Positions 16–26 are enriched in low complexity; that stretch reads SSPGSGSSSGS. WD repeat units lie at residues 73–106, 113–152, 157–193, 212–246, 252–284, 306–348, 356–390, 412–489, 517–628, and 642–704; these read TALA…CYCQ, VLQL…SLKF, ITYC…GYVI, HLSD…ELRV, IHSI…PSRP, PILK…KAIT, IVEF…VVDL, TCTA…YKLK, QMIY…DLVI, and TSLS…IADN. Thr-567 carries the post-translational modification Phosphothreonine. The tract at residues 567–601 is disordered; that stretch reads TPEPETSPPFPDLSSQLPPSRSLSGSTNTVSSEGV. Ser-573, Ser-588, and Ser-592 each carry phosphoserine. Residues 578–592 are compositionally biased toward low complexity; that stretch reads DLSSQLPPSRSLSGS. The residue at position 595 (Thr-595) is a Phosphothreonine. A Phosphoserine modification is found at Ser-598. Arg-708 is modified (omega-N-methylarginine). Positions 747 to 768 are enriched in polar residues; the sequence is TSDHVNGHCTSPTSQSCSSGKR. The tract at residues 747–770 is disordered; the sequence is TSDHVNGHCTSPTSQSCSSGKRLS. Residues Ser-762, Ser-764, Ser-765, Ser-770, Ser-771, Ser-792, Ser-799, Ser-811, Ser-819, Ser-821, and Ser-822 each carry the phosphoserine modification. WD repeat units follow at residues 831 to 888, 897 to 968, 973 to 1017, and 1031 to 1054; these read ITAL…SGTF, TFSC…QTCL, ITET…LDVN, and CFTN…TYSQ. A Phosphothreonine modification is found at Thr-1092. The v-SNARE coiled-coil homology domain maps to 1120 to 1180; that stretch reads SIEGMKGAAG…HELMLKYKDK (61 aa).

Belongs to the WD repeat L(2)GL family. In terms of assembly, interacts with STX1A and STX4. Post-translationally, phosphorylated, leading to STXBP5L increased turnover and subsequent de-repression of insulin secretion. Phosphorylated on serine residues in response to glucose or phorbol esters. In terms of processing, ubiquitinated by the E3 ligase SYVN1, leading to STXBP5L proteasomal degradation. As to expression, detected in hippocampus and cerebellum. Expressed in pancreatic beta-cells where it modulates insulin secretion.

The protein localises to the cytoplasm. The protein resides in the cell membrane. It is found in the membrane. Functionally, plays a role in vesicle trafficking and exocytosis inhibition. In pancreatic beta-cells, inhibits insulin secretion probably by interacting with and regulating STX1A and STX4, key t-SNARE proteins involved in the fusion of insulin granules to the plasma membrane. Also plays a role in neurotransmitter release by inhibiting basal acetylcholine release from axon terminals and by preventing synaptic fatigue upon repetitive stimulation. Promotes as well axonal outgrowth. This chain is Syntaxin-binding protein 5-like (Stxbp5l), found in Mus musculus (Mouse).